The primary structure comprises 481 residues: uncharacterized protein (481 aa).

A helical membrane pass occupies residues 18 to 38 (FMIVTAIAVAIFVVITGVVIF).

The protein localises to the cell inner membrane. Its function is as follows. Involved in DNA conjugation in the recipient strain. This is an uncharacterized protein from Mycolicibacterium smegmatis (strain MKD8) (Mycobacterium smegmatis).